A 577-amino-acid chain; its full sequence is Eukaryotic translation initiation factor 3 subunit D (577 aa).

The interval 103-177 is disordered; that stretch reads DSTKTRFGRG…KDYDKPQRNR (75 aa). Residues 166 to 177 show a composition bias toward basic and acidic residues; that stretch reads GWKDYDKPQRNR. The RNA gate stretch occupies residues 305–319; that stretch reads TLDMVTVNENAADAP. The disordered stretch occupies residues 558–577; that stretch reads GSFEDDGEGDVIEENVEEED. A compositionally biased stretch (acidic residues) spans 560–577; sequence FEDDGEGDVIEENVEEED.

This sequence belongs to the eIF-3 subunit D family. As to quaternary structure, component of the eukaryotic translation initiation factor 3 (eIF-3) complex.

Its subcellular location is the cytoplasm. MRNA cap-binding component of the eukaryotic translation initiation factor 3 (eIF-3) complex, which is involved in protein synthesis of a specialized repertoire of mRNAs and, together with other initiation factors, stimulates binding of mRNA and methionyl-tRNAi to the 40S ribosome. The eIF-3 complex specifically targets and initiates translation of a subset of mRNAs involved in cell proliferation. In the eIF-3 complex, eif3d specifically recognizes and binds the 7-methylguanosine cap of a subset of mRNAs. The sequence is that of Eukaryotic translation initiation factor 3 subunit D from Sclerotinia sclerotiorum (strain ATCC 18683 / 1980 / Ss-1) (White mold).